A 462-amino-acid chain; its full sequence is Argininosuccinate lyase (462 aa).

This sequence belongs to the lyase 1 family. Argininosuccinate lyase subfamily.

It is found in the cytoplasm. The catalysed reaction is 2-(N(omega)-L-arginino)succinate = fumarate + L-arginine. It functions in the pathway amino-acid biosynthesis; L-arginine biosynthesis; L-arginine from L-ornithine and carbamoyl phosphate: step 3/3. This Xanthobacter autotrophicus (strain ATCC BAA-1158 / Py2) protein is Argininosuccinate lyase.